We begin with the raw amino-acid sequence, 27 residues long: Protamine-A (27 aa).

The segment at 1-27 (ARRRRRHASTKLKRRRRRRRHGKKSHK) is disordered.

Testis.

The protein resides in the nucleus. The protein localises to the chromosome. Protamines substitute for histones in the chromatin of sperm during the haploid phase of spermatogenesis. They compact sperm DNA into a highly condensed, stable and inactive complex. This Acipenser stellatus (Sevruga) protein is Protamine-A.